Consider the following 676-residue polypeptide: Potassium-transporting ATPase ATP-binding subunit (676 aa).

The next 4 membrane-spanning stretches (helical) occupy residues 24-44 (NPVM…CFYP), 45-65 (MGIP…TLLF), 212-232 (IFLI…VPFT), and 246-266 (SLVI…GALI). The 4-aspartylphosphate intermediate role is filled by Asp-302. ATP contacts are provided by residues Asp-339, Glu-343, 372–379 (FSAKTRMS), and Lys-390. 2 residues coordinate Mg(2+): Asp-513 and Asp-517. The next 3 membrane-spanning stretches (helical) occupy residues 573 to 593 (FSIA…FYSI), 611 to 631 (AILS…PLAL), and 656 to 676 (GIIA…LIIL).

This sequence belongs to the cation transport ATPase (P-type) (TC 3.A.3) family. Type IA subfamily. As to quaternary structure, the system is composed of three essential subunits: KdpA, KdpB and KdpC.

It localises to the cell membrane. The catalysed reaction is K(+)(out) + ATP + H2O = K(+)(in) + ADP + phosphate + H(+). Its function is as follows. Part of the high-affinity ATP-driven potassium transport (or Kdp) system, which catalyzes the hydrolysis of ATP coupled with the electrogenic transport of potassium into the cytoplasm. This subunit is responsible for energy coupling to the transport system and for the release of the potassium ions to the cytoplasm. In Enterococcus faecalis (strain ATCC 700802 / V583), this protein is Potassium-transporting ATPase ATP-binding subunit.